The primary structure comprises 416 residues: Adenylosuccinate synthetase (416 aa).

GTP contacts are provided by residues 11 to 17 (GDEGKGK) and 39 to 41 (GHT). The active-site Proton acceptor is the Asp12. Residues Asp12 and Gly39 each contribute to the Mg(2+) site. IMP contacts are provided by residues 12 to 15 (DEGK), 37 to 40 (NAGH), Thr125, Arg139, Gln214, Thr229, and Arg290. The Proton donor role is filled by His40. A substrate-binding site is contributed by 286-292 (TTTGRPR). GTP contacts are provided by residues Arg292, 318–320 (KLD), and 405–407 (SLG).

Belongs to the adenylosuccinate synthetase family. In terms of assembly, homodimer. Mg(2+) is required as a cofactor.

The protein localises to the cytoplasm. It catalyses the reaction IMP + L-aspartate + GTP = N(6)-(1,2-dicarboxyethyl)-AMP + GDP + phosphate + 2 H(+). It participates in purine metabolism; AMP biosynthesis via de novo pathway; AMP from IMP: step 1/2. Functionally, plays an important role in the de novo pathway of purine nucleotide biosynthesis. Catalyzes the first committed step in the biosynthesis of AMP from IMP. The protein is Adenylosuccinate synthetase of Picrophilus torridus (strain ATCC 700027 / DSM 9790 / JCM 10055 / NBRC 100828 / KAW 2/3).